The chain runs to 390 residues: 8-amino-7-oxononanoate synthase (390 aa).

Residue Arg-22 participates in substrate binding. 109–110 lines the pyridoxal 5'-phosphate pocket; sequence GY. His-134 lines the substrate pocket. Ser-180, His-208, and Thr-236 together coordinate pyridoxal 5'-phosphate. Residue Lys-239 is modified to N6-(pyridoxal phosphate)lysine. Thr-353 lines the substrate pocket.

This sequence belongs to the class-II pyridoxal-phosphate-dependent aminotransferase family. BioF subfamily. As to quaternary structure, homodimer. Pyridoxal 5'-phosphate is required as a cofactor.

It carries out the reaction 6-carboxyhexanoyl-[ACP] + L-alanine + H(+) = (8S)-8-amino-7-oxononanoate + holo-[ACP] + CO2. The protein operates within cofactor biosynthesis; biotin biosynthesis. Catalyzes the decarboxylative condensation of pimeloyl-[acyl-carrier protein] and L-alanine to produce 8-amino-7-oxononanoate (AON), [acyl-carrier protein], and carbon dioxide. This chain is 8-amino-7-oxononanoate synthase, found in Azoarcus sp. (strain BH72).